The primary structure comprises 1098 residues: Protein translocase subunit SecA (1098 aa).

Residues glutamine 176, glycine 194–threonine 198, and aspartate 696 contribute to the ATP site. Residues glutamate 1024–alanine 1098 form a disordered region. 2 stretches are compositionally biased toward basic and acidic residues: residues glutamine 1041 to aspartate 1051 and alanine 1058 to glycine 1077. The Zn(2+) site is built by cysteine 1082, cysteine 1084, cysteine 1093, and histidine 1094.

The protein belongs to the SecA family. Monomer and homodimer. Part of the essential Sec protein translocation apparatus which comprises SecA, SecYEG and auxiliary proteins SecDF. Other proteins may also be involved. Requires Zn(2+) as cofactor.

Its subcellular location is the cell inner membrane. It localises to the cytoplasm. The catalysed reaction is ATP + H2O + cellular proteinSide 1 = ADP + phosphate + cellular proteinSide 2.. Functionally, part of the Sec protein translocase complex. Interacts with the SecYEG preprotein conducting channel. Has a central role in coupling the hydrolysis of ATP to the transfer of proteins into and across the cell membrane, serving as an ATP-driven molecular motor driving the stepwise translocation of polypeptide chains across the membrane. In Phocaeicola vulgatus (strain ATCC 8482 / DSM 1447 / JCM 5826 / CCUG 4940 / NBRC 14291 / NCTC 11154) (Bacteroides vulgatus), this protein is Protein translocase subunit SecA.